An 88-amino-acid chain; its full sequence is Apolipoprotein C-I (88 aa).

An N-terminal signal peptide occupies residues methionine 1–alanine 26.

This sequence belongs to the apolipoprotein C1 family.

It is found in the secreted. Functionally, inhibitor of lipoprotein binding to the low density lipoprotein (LDL) receptor, LDL receptor-related protein, and very low density lipoprotein (VLDL) receptor. Associates with high density lipoproteins (HDL) and the triacylglycerol-rich lipoproteins in the plasma and makes up about 10% of the protein of the VLDL and 2% of that of HDL. Appears to interfere directly with fatty acid uptake and is also the major plasma inhibitor of cholesteryl ester transfer protein (CETP). Binds free fatty acids and reduces their intracellular esterification. Modulates the interaction of APOE with beta-migrating VLDL and inhibits binding of beta-VLDL to the LDL receptor-related protein. The sequence is that of Apolipoprotein C-I (Apoc1) from Rattus norvegicus (Rat).